The sequence spans 1148 residues: Protein pianissimo A (1148 aa).

Over residues 1-34 the composition is skewed to low complexity; sequence MTSSDSSVNTTSSSFGNISISSPNHSSSTPPLNN. The tract at residues 1–41 is disordered; sequence MTSSDSSVNTTSSSFGNISISSPNHSSSTPPLNNGNGNNVS. The region spanning 803-914 is the N-terminal Ras-GEF domain; the sequence is KVSALSLNVL…STSGVYLPPH (112 aa).

This sequence belongs to the RICTOR family. In terms of assembly, part of a complex, TORC2, consisting of tor, lst8, piaA and ripA. Additional proteins, such as 14-3-3 and heat-shock proteins, may also belong to the TORC2 complex.

It is found in the cytoplasm. In terms of biological role, regulates cell growth, chemotaxis, signal relay and the actin cytoskeleton. Required for chemoattractant receptor and G protein-mediated activation of the 12 transmembrane domain adenylyl cyclase. Functions as a part of protein complex TORC2. TORC2, is presumed to be indirectly negatively modulated by rapamycin and regulates actin polarization. TORC2, but not TORC1, negatively regulates phagocytosis. This protein and dagA protein CRAC, a cytosolic regulator, are both essential for activation of the enzyme adenylyl cyclase. This protein and CRAC do not function redundantly. Both proteins are integral components of the adenylyl cyclase activation pathway. The polypeptide is Protein pianissimo A (piaA) (Dictyostelium discoideum (Social amoeba)).